The primary structure comprises 210 residues: Thymidylate kinase (210 aa).

10–17 (GPEGAGKS) is an ATP binding site.

This sequence belongs to the thymidylate kinase family.

It catalyses the reaction dTMP + ATP = dTDP + ADP. Phosphorylation of dTMP to form dTDP in both de novo and salvage pathways of dTTP synthesis. In Pseudomonas putida (strain GB-1), this protein is Thymidylate kinase.